A 595-amino-acid chain; its full sequence is 3-hydroxy-3-methylglutaryl-coenzyme A reductase 2 (595 aa).

The N-linked (GlcNAc...) asparagine glycan is linked to Asn-35. The next 2 helical transmembrane spans lie at 48–68 (LPLYLTNGLFFTMFFSVMYFL) and 92–112 (AIVSLIASVIYLLGFFGIGFV). The linker stretch occupies residues 113 to 183 (QTFVSRGNND…SPLITPASSE (71 aa)). Asn-121 carries N-linked (GlcNAc...) asparagine glycosylation. Residues 184–595 (EDEEIINSVV…KYNRSTKASS (412 aa)) form a catalytic region. Residue Glu-278 is the Charge relay system of the active site. The N-linked (GlcNAc...) asparagine glycan is linked to Asn-342. Lys-410 acts as the Charge relay system in catalysis. The N-linked (GlcNAc...) asparagine glycan is linked to Asn-455. The Charge relay system role is filled by Asp-486. Residue His-584 is the Proton donor of the active site. A glycan (N-linked (GlcNAc...) asparagine) is linked at Asn-588.

The protein belongs to the HMG-CoA reductase family. As to expression, expressed in young flowers and in mature sepals and ovaries.

The protein resides in the endoplasmic reticulum membrane. It catalyses the reaction (R)-mevalonate + 2 NADP(+) + CoA = (3S)-3-hydroxy-3-methylglutaryl-CoA + 2 NADPH + 2 H(+). It participates in metabolic intermediate biosynthesis; (R)-mevalonate biosynthesis; (R)-mevalonate from acetyl-CoA: step 3/3. Functionally, catalyzes the synthesis of mevalonate. The specific precursor of all isoprenoid compounds present in plants. In Solanum tuberosum (Potato), this protein is 3-hydroxy-3-methylglutaryl-coenzyme A reductase 2 (HMG2).